Reading from the N-terminus, the 302-residue chain is Succinate--CoA ligase [ADP-forming] subunit alpha (302 aa).

CoA contacts are provided by residues threonine 17–threonine 20, lysine 43, and isoleucine 96–glutamate 98. Position 159 (tyrosine 159) interacts with substrate. Catalysis depends on histidine 247, which acts as the Tele-phosphohistidine intermediate.

It belongs to the succinate/malate CoA ligase alpha subunit family. Heterotetramer of two alpha and two beta subunits.

The catalysed reaction is succinate + ATP + CoA = succinyl-CoA + ADP + phosphate. It carries out the reaction GTP + succinate + CoA = succinyl-CoA + GDP + phosphate. It functions in the pathway carbohydrate metabolism; tricarboxylic acid cycle; succinate from succinyl-CoA (ligase route): step 1/1. Its function is as follows. Succinyl-CoA synthetase functions in the citric acid cycle (TCA), coupling the hydrolysis of succinyl-CoA to the synthesis of either ATP or GTP and thus represents the only step of substrate-level phosphorylation in the TCA. The alpha subunit of the enzyme binds the substrates coenzyme A and phosphate, while succinate binding and nucleotide specificity is provided by the beta subunit. The chain is Succinate--CoA ligase [ADP-forming] subunit alpha from Staphylococcus aureus (strain MRSA252).